A 107-amino-acid chain; its full sequence is SH3 domain-binding glutamic acid-rich-like protein 2 (107 aa).

An SH3-binding motif is present at residues 61–67 (QGNPLPP).

This sequence belongs to the SH3BGR family.

The protein resides in the nucleus. The polypeptide is SH3 domain-binding glutamic acid-rich-like protein 2 (Sh3bgrl2) (Mus musculus (Mouse)).